The chain runs to 375 residues: Aminomethyltransferase (375 aa).

The protein belongs to the GcvT family. In terms of assembly, the glycine cleavage system is composed of four proteins: P, T, L and H.

It carries out the reaction N(6)-[(R)-S(8)-aminomethyldihydrolipoyl]-L-lysyl-[protein] + (6S)-5,6,7,8-tetrahydrofolate = N(6)-[(R)-dihydrolipoyl]-L-lysyl-[protein] + (6R)-5,10-methylene-5,6,7,8-tetrahydrofolate + NH4(+). Functionally, the glycine cleavage system catalyzes the degradation of glycine. This is Aminomethyltransferase from Symbiobacterium thermophilum (strain DSM 24528 / JCM 14929 / IAM 14863 / T).